Here is a 323-residue protein sequence, read N- to C-terminus: MELTGVTSQSIFDDNAADIKLSWVAGLEGADRAFDVEFAREATSAADLVGHLNLIHPNRIQVLGKPEITYYQRLDDETRKRQMGELILLEPPFLVVADGMEPPPDLELRCTRSSTPLFTTPVSSAAVIDHLRLYLSRISAPRVTMHGVFLDILGMGVLIMGESGLGKSELGLELISRGHGLVADDAVDFVRLGPDFIEGRCPPLLQNLLEVRGLGLLDIKTIFGETAVRRKMKMKLVVQLVRRNDGEFERLPLDSQYLDVLGLPIHMVKIQVAAGRNLAVLVEAAVRNTILRLRGIDTLRDFMDRQRAAMQADAVSRGQGRLL.

Residues His-146 and Lys-167 contribute to the active site. 161-168 (GESGLGKS) lines the ATP pocket. Ser-168 contributes to the Mg(2+) binding site. Asp-185 (proton acceptor; for phosphorylation activity. Proton donor; for dephosphorylation activity) is an active-site residue. The interval 209 to 218 (LEVRGLGLLD) is important for the catalytic mechanism of both phosphorylation and dephosphorylation. Glu-210 is a Mg(2+) binding site. Residue Arg-250 is part of the active site. The important for the catalytic mechanism of dephosphorylation stretch occupies residues 271–276 (QVAAGR).

This sequence belongs to the HPrK/P family. As to quaternary structure, homohexamer. Requires Mg(2+) as cofactor.

The catalysed reaction is [HPr protein]-L-serine + ATP = [HPr protein]-O-phospho-L-serine + ADP + H(+). The enzyme catalyses [HPr protein]-O-phospho-L-serine + phosphate + H(+) = [HPr protein]-L-serine + diphosphate. Catalyzes the ATP- as well as the pyrophosphate-dependent phosphorylation of a specific serine residue in HPr, a phosphocarrier protein of the phosphoenolpyruvate-dependent sugar phosphotransferase system (PTS). HprK/P also catalyzes the pyrophosphate-producing, inorganic phosphate-dependent dephosphorylation (phosphorolysis) of seryl-phosphorylated HPr (P-Ser-HPr). The sequence is that of HPr kinase/phosphorylase from Cupriavidus pinatubonensis (strain JMP 134 / LMG 1197) (Cupriavidus necator (strain JMP 134)).